The sequence spans 1073 residues: Semaphorin-6D (1073 aa).

A signal peptide spans 1–20 (MGFLLLWFCVLFLLVSRLRA). Over 21 to 662 (VSFPEDDEPL…GESNQMVHMN (642 aa)) the chain is Extracellular. Residues 27–512 (DEPLNTVDYH…FSSCVVRIPL (486 aa)) enclose the Sema domain. N-linked (GlcNAc...) asparagine glycosylation is present at asparagine 51. Disulfide bonds link cysteine 108/cysteine 118, cysteine 136/cysteine 145, cysteine 259/cysteine 370, and cysteine 284/cysteine 329. Asparagine 283 carries an N-linked (GlcNAc...) asparagine glycan. N-linked (GlcNAc...) asparagine glycosylation is found at asparagine 435 and asparagine 461. Disulfide bonds link cysteine 477-cysteine 506, cysteine 515-cysteine 533, cysteine 521-cysteine 568, and cysteine 525-cysteine 541. The PSI domain occupies 514 to 569 (RCERYGSCKKSCIASRDPYCGWLSQGVCERVTLGMLPGGYEQDTEYGNTAHLGDCH). Asparagine 631 is a glycosylation site (N-linked (GlcNAc...) asparagine). Residues 663-683 (VLITCVFAAFVLGAFIAGVAV) traverse the membrane as a helical segment. Topologically, residues 684–1073 (YCYRDMFVRK…SVRPLNKYTY (390 aa)) are cytoplasmic. Phosphoserine occurs at positions 723, 734, and 744. 4 disordered regions span residues 745–825 (RKEL…GHIP), 839–876 (TSFS…VDSR), 919–986 (PPKV…SPNG), and 1021–1073 (LQPS…KYTY). Threonine 773 bears the Phosphothreonine mark. Residues 790-806 (SHSEKAHSHGASRKEHP) show a composition bias toward basic and acidic residues. 3 positions are modified to phosphoserine: serine 931, serine 957, and serine 983. Over residues 931-942 (SPPSTLPRNSPT) the composition is skewed to polar residues. Composition is skewed to polar residues over residues 1021-1037 (LQPS…NGTL) and 1059-1073 (VPQT…KYTY).

Belongs to the semaphorin family. In terms of tissue distribution, expressed in brain and lung.

It is found in the cell membrane. In terms of biological role, shows growth cone collapsing activity on dorsal root ganglion (DRG) neurons in vitro. May be a stop signal for the DRG neurons in their target areas, and possibly also for other neurons. May also be involved in the maintenance and remodeling of neuronal connections. Ligand of TREM2 with PLXNA1 as coreceptor in dendritic cells, plays a role in the generation of immune responses and skeletal homeostasis. This chain is Semaphorin-6D (Sema6d), found in Mus musculus (Mouse).